A 380-amino-acid chain; its full sequence is Pregnancy-associated glycoprotein 1 (380 aa).

The signal sequence occupies residues 1–15 (MKWLVLLGLVAFSEC). Positions 16–53 (IVKIPLRRLKTMRNVVSGKNMLNNFLKEHAYSLSQISF) are cleaved as a propeptide — activation peptide. Asn-57 and Asn-74 each carry an N-linked (GlcNAc...) asparagine glycan. In terms of domain architecture, Peptidase A1 spans 71-377 (YMGNITIGTP…DRGNDRIGLA (307 aa)). Residue Asp-89 is part of the active site. A disulfide bond links Cys-102 and Cys-107. 2 N-linked (GlcNAc...) asparagine glycosylation sites follow: Asn-125 and Asn-182. The cysteines at positions 261 and 265 are disulfide-linked. Residue Asp-270 is part of the active site. Residues Cys-303 and Cys-337 are joined by a disulfide bond.

The protein belongs to the peptidase A1 family. N-Glycosylated; the glycans terminate in either N-acetyl-galactosamine (GalNAc) or N-acetyllactosamine. Terminal GalNAc on Asn-linked glycans is greatly reduced prior to parturition while lactosamine-type N-glycans remain unaltered. In terms of tissue distribution, trophoblast and placental tissue. Produced specifically in the invasive binucleate cells of the placenta. Becomes detectable in maternal serum soon after implantation.

It localises to the secreted. The protein resides in the extracellular space. Functionally, appears to be proteolytically inactive. This is Pregnancy-associated glycoprotein 1 from Bos taurus (Bovine).